The following is a 431-amino-acid chain: Chaperone SurA (431 aa).

Residues Met1–Ala20 form the signal peptide. 2 consecutive PpiC domains span residues Gly171 to Asp272 and Val282 to Asp382.

It is found in the periplasm. The catalysed reaction is [protein]-peptidylproline (omega=180) = [protein]-peptidylproline (omega=0). Chaperone involved in the correct folding and assembly of outer membrane proteins. Recognizes specific patterns of aromatic residues and the orientation of their side chains, which are found more frequently in integral outer membrane proteins. May act in both early periplasmic and late outer membrane-associated steps of protein maturation. In Sodalis glossinidius (strain morsitans), this protein is Chaperone SurA.